A 457-amino-acid chain; its full sequence is Chromosomal replication initiator protein DnaA (457 aa).

Positions 1–81 (MERDLSQLWQ…NNTDLVIKVQ (81 aa)) are domain I, interacts with DnaA modulators. The interval 81 to 119 (QEGSKPAARKVVAQQEIANTPVQHSAPMPENEPQAAFRS) is domain II. The interval 120-337 (NLNQHHLFEN…GALNRVHANA (218 aa)) is domain III, AAA+ region. Residues Gly-165, Gly-167, Lys-168, and Thr-169 each coordinate ATP. Residues 338–457 (DFTGKAITID…WSNLIRTLSA (120 aa)) form a domain IV, binds dsDNA region.

It belongs to the DnaA family. Oligomerizes as a right-handed, spiral filament on DNA at oriC.

Its subcellular location is the cytoplasm. In terms of biological role, plays an essential role in the initiation and regulation of chromosomal replication. ATP-DnaA binds to the origin of replication (oriC) to initiate formation of the DNA replication initiation complex once per cell cycle. Binds the DnaA box (a 9 base pair repeat at the origin) and separates the double-stranded (ds)DNA. Forms a right-handed helical filament on oriC DNA; dsDNA binds to the exterior of the filament while single-stranded (ss)DNA is stabiized in the filament's interior. The ATP-DnaA-oriC complex binds and stabilizes one strand of the AT-rich DNA unwinding element (DUE), permitting loading of DNA polymerase. After initiation quickly degrades to an ADP-DnaA complex that is not apt for DNA replication. Binds acidic phospholipids. This chain is Chromosomal replication initiator protein DnaA, found in Mannheimia succiniciproducens (strain KCTC 0769BP / MBEL55E).